Reading from the N-terminus, the 98-residue chain is Small ribosomal subunit protein uS19 (98 aa).

Residues 77–98 are disordered; it reads TRTYRGHAGGKAEKGGAAPKRK.

This sequence belongs to the universal ribosomal protein uS19 family.

In terms of biological role, protein S19 forms a complex with S13 that binds strongly to the 16S ribosomal RNA. The polypeptide is Small ribosomal subunit protein uS19 (Chlorobium phaeovibrioides (strain DSM 265 / 1930) (Prosthecochloris vibrioformis (strain DSM 265))).